The following is a 191-amino-acid chain: GTP cyclohydrolase 1 (191 aa).

3 residues coordinate Zn(2+): Cys-80, His-83, and Cys-151.

The protein belongs to the GTP cyclohydrolase I family. Toroid-shaped homodecamer, composed of two pentamers of five dimers.

It catalyses the reaction GTP + H2O = 7,8-dihydroneopterin 3'-triphosphate + formate + H(+). Its pathway is cofactor biosynthesis; 7,8-dihydroneopterin triphosphate biosynthesis; 7,8-dihydroneopterin triphosphate from GTP: step 1/1. This chain is GTP cyclohydrolase 1, found in Leifsonia xyli subsp. xyli (strain CTCB07).